The sequence spans 258 residues: PHD finger protein ALFIN-LIKE 5 (258 aa).

The interval 143–205 (AKKQTKEKAP…EEEERDNTLC (63 aa)) is disordered. Positions 152–165 (PNSTNKPNKPSSKM) are enriched in polar residues. Residues 184–200 (DDDESGDEYADEEEEER) show a composition bias toward acidic residues. The PHD-type zinc-finger motif lies at 202–254 (NTLCGSCGTNDGKDEFWICCDSCERWYHGKCVKITPARAEHIKHYKCPDCGNK).

Belongs to the Alfin family.

It is found in the nucleus. Histone-binding component that specifically recognizes H3 tails trimethylated on 'Lys-4' (H3K4me3), which mark transcription start sites of virtually all active genes. This is PHD finger protein ALFIN-LIKE 5 from Oryza sativa subsp. indica (Rice).